We begin with the raw amino-acid sequence, 121 residues long: Large ribosomal subunit protein uL22 (121 aa).

It belongs to the universal ribosomal protein uL22 family. In terms of assembly, part of the 50S ribosomal subunit.

This protein binds specifically to 23S rRNA; its binding is stimulated by other ribosomal proteins, e.g. L4, L17, and L20. It is important during the early stages of 50S assembly. It makes multiple contacts with different domains of the 23S rRNA in the assembled 50S subunit and ribosome. In terms of biological role, the globular domain of the protein is located near the polypeptide exit tunnel on the outside of the subunit, while an extended beta-hairpin is found that lines the wall of the exit tunnel in the center of the 70S ribosome. The chain is Large ribosomal subunit protein uL22 from Synechococcus sp. (strain CC9605).